The following is a 549-amino-acid chain: Oxygen-dependent choline dehydrogenase (549 aa).

4–33 serves as a coordination point for FAD; the sequence is DFVIIGSGSAGSAMAYRLSENGRYSVIVIE. H465 (proton acceptor) is an active-site residue.

Belongs to the GMC oxidoreductase family. It depends on FAD as a cofactor.

The enzyme catalyses choline + A = betaine aldehyde + AH2. It catalyses the reaction betaine aldehyde + NAD(+) + H2O = glycine betaine + NADH + 2 H(+). It functions in the pathway amine and polyamine biosynthesis; betaine biosynthesis via choline pathway; betaine aldehyde from choline (cytochrome c reductase route): step 1/1. Involved in the biosynthesis of the osmoprotectant glycine betaine. Catalyzes the oxidation of choline to betaine aldehyde and betaine aldehyde to glycine betaine at the same rate. The polypeptide is Oxygen-dependent choline dehydrogenase (Brucella suis biovar 1 (strain 1330)).